The sequence spans 548 residues: uncharacterized protein (548 aa).

The N-terminal stretch at 1–24 (MKKATKLLLSILPISSISFLSVVS) is a signal peptide. Cysteine 25 carries N-palmitoyl cysteine lipidation. Cysteine 25 carries S-diacylglycerol cysteine lipidation. The segment at 26-129 (STRNSNAKQP…NNQHADQPNI (104 aa)) is disordered. Residues 34–44 (QPDKKPEKPNE) are compositionally biased toward basic and acidic residues. Residues 58–78 (PTNNNNNSNNNSNSNNNKPGS) are compositionally biased toward low complexity. The segment covering 83–109 (ENKDPSKSEETPEKPERDPKKPDKQPQ) has biased composition (basic and acidic residues). The segment covering 110-128 (GDDPNNHQPHNNQHADQPN) has biased composition (low complexity).

This sequence belongs to the mycoplasma p72 lipoprotein family.

The protein localises to the cell membrane. This is an uncharacterized protein from Mycoplasma mycoides subsp. mycoides SC (strain CCUG 32753 / NCTC 10114 / PG1).